The primary structure comprises 32 residues: U3-ctenitoxin-Pk1a (32 aa).

Disulfide bonds link C3/C17, C10/C21, and C16/C30.

This sequence belongs to the neurotoxin 17 (21C2) family. As to expression, expressed by the venom gland.

It is found in the secreted. Functionally, may act as a neurotoxin. This Phoneutria keyserlingi (Brazilian wandering spider) protein is U3-ctenitoxin-Pk1a.